The chain runs to 76 residues: Liver-expressed antimicrobial peptide 2 (76 aa).

The signal sequence occupies residues 1–22 (MLQLKLFAVLLTCLLLLGQVNS). Positions 23–36 (SPVPEVSSAKRSRR) are excised as a propeptide. Intrachain disulfides connect Cys53–Cys64 and Cys59–Cys69.

The protein belongs to the LEAP2 family.

The protein localises to the secreted. Functionally, has an antimicrobial activity. This Mus musculus (Mouse) protein is Liver-expressed antimicrobial peptide 2 (Leap2).